The sequence spans 377 residues: UPF0754 membrane protein lwe2241 (377 aa).

Helical transmembrane passes span 1–21 (MSVL…GAMT) and 357–377 (YLGG…AIWI).

This sequence belongs to the UPF0754 family.

The protein resides in the cell membrane. The protein is UPF0754 membrane protein lwe2241 of Listeria welshimeri serovar 6b (strain ATCC 35897 / DSM 20650 / CCUG 15529 / CIP 8149 / NCTC 11857 / SLCC 5334 / V8).